Here is a 1235-residue protein sequence, read N- to C-terminus: Bromodomain-containing protein 8 (1235 aa).

The residue at position 85 (Lys85) is an N6-acetyllysine. Residues 97–171 (VRKLTAERVE…ATDAAYQARQ (75 aa)) are a coiled coil. The residue at position 124 (Arg124) is a Phosphothreonine. 2 positions are modified to phosphoserine: Leu128 and Asp144. The interval 186 to 205 (RSPIDSASPGGDYPLGDLTP) is disordered. Ala264 is modified (phosphothreonine). A phosphoserine mark is found at Ser268, Ser284, Ser383, and Ser387. A Glycyl lysine isopeptide (Lys-Gly) (interchain with G-Cter in SUMO2) cross-link involves residue Lys469. Lys481 bears the N6-acetyllysine; alternate mark. Lys481 participates in a covalent cross-link: Glycyl lysine isopeptide (Lys-Gly) (interchain with G-Cter in SUMO1); alternate. Lys481 is covalently cross-linked (Glycyl lysine isopeptide (Lys-Gly) (interchain with G-Cter in SUMO2); alternate). Glycyl lysine isopeptide (Lys-Gly) (interchain with G-Cter in SUMO2) cross-links involve residues Lys509 and Lys575. Residues 551–597 (TAAGEIVEADVAIGKGDETPLTNVKTEASPESMLSPSHGSNPIEDPL) form a disordered region. Residue Ser579 is modified to Phosphoserine. Lys612 is covalently cross-linked (Glycyl lysine isopeptide (Lys-Gly) (interchain with G-Cter in SUMO2)). Phosphoserine is present on residues Ser621, Ser637, and Ser641. A disordered region spans residues 621 to 672 (SQIKDAPGEDEEEDGVSEAASLEEPKEEDQGEGYLSEMDNEPPVSESDDGFS). Residues 706-811 (IQAQKIWKKA…RDVLEQIQQF (106 aa)) form the Bromo 1 domain. Disordered regions lie at residues 827–848 (AKSL…DSVP), 903–940 (ETED…AARK), and 966–999 (ESSE…ETEE). Positions 831–846 (RGRDSTRKQDASEKDS) are enriched in basic and acidic residues. Acidic residues predominate over residues 905–915 (EDPEAEELEES). Position 924 is a phosphoserine (Leu924). Residues 979–999 (QEGREIKASEGERELCRETEE) are compositionally biased toward basic and acidic residues. In terms of domain architecture, Bromo 2 spans 1099–1207 (DDPVQDHLLF…QEVLEQIQVL (109 aa)).

As to quaternary structure, component of the NuA4 histone acetyltransferase complex which contains the catalytic subunit KAT5/TIP60 and the subunits EP400, TRRAP/PAF400, BRD8/SMAP, EPC1, DMAP1/DNMAP1, RUVBL1/TIP49, RUVBL2, ING3, actin, ACTL6A/BAF53A, MORF4L1/MRG15, MORF4L2/MRGX, MRGBP, YEATS4/GAS41, VPS72/YL1 and MEAF6. The NuA4 complex interacts with MYC and the adenovirus E1A protein. Component of a NuA4-related complex which contains EP400, TRRAP/PAF400, SRCAP, BRD8/SMAP, EPC1, DMAP1/DNMAP1, RUVBL1/TIP49, RUVBL2, actin, ACTL6A/BAF53A, VPS72 and YEATS4/GAS41. BRD8 isoform 2 interacts with RXRA/NR2B1 and THRB/ERBA2. Component of a SWR1-like complex. As to expression, expressed in adipose tissue, brain, heart, kidney, liver, lung, pancreas, placenta and skeletal muscle.

Its subcellular location is the nucleus. Functionally, may act as a coactivator during transcriptional activation by hormone-activated nuclear receptors (NR). Isoform 2 stimulates transcriptional activation by AR/DHTR, ESR1/NR3A1, RXRA/NR2B1 and THRB/ERBA2. At least isoform 1 and isoform 2 are components of the NuA4 histone acetyltransferase (HAT) complex which is involved in transcriptional activation of select genes principally by acetylation of nucleosomal histones H4 and H2A. This modification may both alter nucleosome - DNA interactions and promote interaction of the modified histones with other proteins which positively regulate transcription. This complex may be required for the activation of transcriptional programs associated with oncogene and proto-oncogene mediated growth induction, tumor suppressor mediated growth arrest and replicative senescence, apoptosis, and DNA repair. NuA4 may also play a direct role in DNA repair when recruited to sites of DNA damage. Component of a SWR1-like complex that specifically mediates the removal of histone H2A.Z/H2AZ1 from the nucleosome. This is Bromodomain-containing protein 8 (BRD8) from Homo sapiens (Human).